The sequence spans 419 residues: Gamma-glutamyl phosphate reductase (419 aa).

The protein belongs to the gamma-glutamyl phosphate reductase family.

The protein localises to the cytoplasm. The catalysed reaction is L-glutamate 5-semialdehyde + phosphate + NADP(+) = L-glutamyl 5-phosphate + NADPH + H(+). Its pathway is amino-acid biosynthesis; L-proline biosynthesis; L-glutamate 5-semialdehyde from L-glutamate: step 2/2. Catalyzes the NADPH-dependent reduction of L-glutamate 5-phosphate into L-glutamate 5-semialdehyde and phosphate. The product spontaneously undergoes cyclization to form 1-pyrroline-5-carboxylate. In Caulobacter sp. (strain K31), this protein is Gamma-glutamyl phosphate reductase.